A 337-amino-acid polypeptide reads, in one-letter code: Glyceraldehyde-3-phosphate dehydrogenase, cytosolic (337 aa).

Residues 13–14 (RI), Asp-35, and Arg-82 each bind NAD(+). Residues 153 to 155 (SCT), Thr-184, 213 to 214 (TG), and Arg-236 each bind D-glyceraldehyde 3-phosphate. Cys-154 functions as the Nucleophile in the catalytic mechanism. Asn-318 contacts NAD(+).

It belongs to the glyceraldehyde-3-phosphate dehydrogenase family. Homotetramer.

Its subcellular location is the cytoplasm. The enzyme catalyses D-glyceraldehyde 3-phosphate + phosphate + NAD(+) = (2R)-3-phospho-glyceroyl phosphate + NADH + H(+). Its pathway is carbohydrate degradation; glycolysis; pyruvate from D-glyceraldehyde 3-phosphate: step 1/5. Key enzyme in glycolysis that catalyzes the first step of the pathway by converting D-glyceraldehyde 3-phosphate (G3P) into 3-phospho-D-glyceroyl phosphate. Essential for the maintenance of cellular ATP levels and carbohydrate metabolism. This is Glyceraldehyde-3-phosphate dehydrogenase, cytosolic (GAPC) from Antirrhinum majus (Garden snapdragon).